Reading from the N-terminus, the 280-residue chain is Mevalonyl-coenzyme A hydratase SIDH (280 aa).

Positions 278-280 (SKL) match the PTS1-type peroxisomal targeting signal motif.

The protein belongs to the enoyl-CoA hydratase/isomerase family.

It is found in the peroxisome. It functions in the pathway siderophore biosynthesis. Its function is as follows. Mevalonyl-coenzyme A hydratase; part of the gene cluster that mediates the biosynthesis of at least 11 siderophores, including beauverichelin A, dimerumic acid (DA), Na-dimethyl coprogen (NADC), eleutherazine B, ferricrocin (FC), fusarinine A, fusarinine C (FsC), metachelin A, mevalonolactone, rhodotorulic acid (RA) and tenellin. This cocktail of siderophores for iron metabolism is essential for virulence, and more specifically for the fungal virulence in penetrating through the host cuticle. Siderophore synthesis is also involved in conidial germination under iron-deficient conditions. For biosynthesis of fusarinine C, the transacylase SIDF transfers anhydromevalonyl to N(5)-hydroxyornithine. The required anhydromevalonyl-CoA moiety is derived from mevalonate by CoA ligation and dehydration catalyzed by SIDI and sidH respectively. SIDH is not essential for siderophore production, probably due to functional redundancy of this protein family, as there are 15 homologs of SIDH in B.bassiana. In Beauveria bassiana (strain ARSEF 2860) (White muscardine disease fungus), this protein is Mevalonyl-coenzyme A hydratase SIDH.